A 94-amino-acid polypeptide reads, in one-letter code: Small ribosomal subunit protein uS17 (94 aa).

It belongs to the universal ribosomal protein uS17 family. In terms of assembly, part of the 30S ribosomal subunit.

In terms of biological role, one of the primary rRNA binding proteins, it binds specifically to the 5'-end of 16S ribosomal RNA. The chain is Small ribosomal subunit protein uS17 from Deinococcus geothermalis (strain DSM 11300 / CIP 105573 / AG-3a).